A 358-amino-acid chain; its full sequence is PDZ and LIM domain protein 3 (358 aa).

The PDZ domain occupies 1–84 (MPQNVLLPGP…QLCLKIDRAE (84 aa)). 2 disordered regions span residues 126-155 (FILPGRSSGSSTPSGFDPGSGRSTPSSVST) and 237-274 (DTEHPSKPRQSGSFKILQDMVDDDPDRPSGTRSVRAPV). Over residues 129 to 146 (PGRSSGSSTPSGFDPGSG) the composition is skewed to low complexity. One can recognise an LIM zinc-binding domain in the interval 288–347 (PICDRCGNGIVGTVVKAKDKLRHPDCFVCSDCNLNLKQKGYFFVEGQLYCEAHARARMRP).

It is found in the cytoplasm. The protein resides in the myofibril. It localises to the sarcomere. Its subcellular location is the z line. May play a role in the organization of actin filament arrays within muscle cells. This chain is PDZ and LIM domain protein 3 (pdlim3), found in Xenopus laevis (African clawed frog).